The sequence spans 581 residues: uncharacterized protein (581 aa).

This is an uncharacterized protein from Borreliella burgdorferi (strain ATCC 35210 / DSM 4680 / CIP 102532 / B31) (Borrelia burgdorferi).